Reading from the N-terminus, the 269-residue chain is Eukaryotic translation initiation factor 3 subunit G-1 (269 aa).

An RRM domain is found at 188–266 (AAIRISNLSE…LILSVEWSKP (79 aa)).

The protein belongs to the eIF-3 subunit G family. Component of the eukaryotic translation initiation factor 3 (eIF-3) complex. The eIF-3 complex interacts with pix.

The protein localises to the cytoplasm. Functionally, RNA-binding component of the eukaryotic translation initiation factor 3 (eIF-3) complex, which is involved in protein synthesis of a specialized repertoire of mRNAs and, together with other initiation factors, stimulates binding of mRNA and methionyl-tRNAi to the 40S ribosome. The eIF-3 complex specifically targets and initiates translation of a subset of mRNAs involved in cell proliferation. This subunit can bind 18S rRNA. The polypeptide is Eukaryotic translation initiation factor 3 subunit G-1 (Drosophila persimilis (Fruit fly)).